A 713-amino-acid polypeptide reads, in one-letter code: UvrABC system protein B (713 aa).

The Helicase ATP-binding domain occupies 35 to 421 (RRIRAGEKDV…GDGFVEQIIR (387 aa)). 48–55 (GATGTGKS) serves as a coordination point for ATP. Positions 101-124 (YYDYYQPEAYVPQSDTYIEKDSSI) match the Beta-hairpin motif. In terms of domain architecture, Helicase C-terminal spans 438-604 (QIDDLVHEIR…PLRKKINDIV (167 aa)). The interval 624–663 (QAKDGKGAKAPVPSLGGKAAAKGAKSAKGKAKETVPTDRP) is disordered. Residues 639 to 649 (GGKAAAKGAKS) are compositionally biased toward low complexity. The span at 653-663 (KAKETVPTDRP) shows a compositional bias: basic and acidic residues. The UVR domain occupies 668–703 (AEEIEELTNRMRAAAADLQFEIAARLRDEVSEMKKE).

This sequence belongs to the UvrB family. In terms of assembly, forms a heterotetramer with UvrA during the search for lesions. Interacts with UvrC in an incision complex.

The protein resides in the cytoplasm. Its function is as follows. The UvrABC repair system catalyzes the recognition and processing of DNA lesions. A damage recognition complex composed of 2 UvrA and 2 UvrB subunits scans DNA for abnormalities. Upon binding of the UvrA(2)B(2) complex to a putative damaged site, the DNA wraps around one UvrB monomer. DNA wrap is dependent on ATP binding by UvrB and probably causes local melting of the DNA helix, facilitating insertion of UvrB beta-hairpin between the DNA strands. Then UvrB probes one DNA strand for the presence of a lesion. If a lesion is found the UvrA subunits dissociate and the UvrB-DNA preincision complex is formed. This complex is subsequently bound by UvrC and the second UvrB is released. If no lesion is found, the DNA wraps around the other UvrB subunit that will check the other stand for damage. The sequence is that of UvrABC system protein B from Streptomyces avermitilis (strain ATCC 31267 / DSM 46492 / JCM 5070 / NBRC 14893 / NCIMB 12804 / NRRL 8165 / MA-4680).